We begin with the raw amino-acid sequence, 458 residues long: tRNA modification GTPase MnmE (458 aa).

(6S)-5-formyl-5,6,7,8-tetrahydrofolate is bound by residues Arg32, Glu89, and Lys128. The region spanning 224 to 381 (GVRVVLAGRP…LCQRLKECAG (158 aa)) is the TrmE-type G domain. Asn234 serves as a coordination point for K(+). Residues 234 to 239 (NVGKSS), 253 to 259 (TDVPGTT), and 278 to 281 (DTAG) contribute to the GTP site. Residue Ser238 coordinates Mg(2+). Positions 253, 255, and 258 each coordinate K(+). Thr259 contacts Mg(2+). Lys458 provides a ligand contact to (6S)-5-formyl-5,6,7,8-tetrahydrofolate.

This sequence belongs to the TRAFAC class TrmE-Era-EngA-EngB-Septin-like GTPase superfamily. TrmE GTPase family. As to quaternary structure, homodimer. Heterotetramer of two MnmE and two MnmG subunits. K(+) serves as cofactor.

The protein localises to the cytoplasm. Exhibits a very high intrinsic GTPase hydrolysis rate. Involved in the addition of a carboxymethylaminomethyl (cmnm) group at the wobble position (U34) of certain tRNAs, forming tRNA-cmnm(5)s(2)U34. The chain is tRNA modification GTPase MnmE from Nitrosococcus oceani (strain ATCC 19707 / BCRC 17464 / JCM 30415 / NCIMB 11848 / C-107).